Consider the following 288-residue polypeptide: Short chain aldehyde dehydrogenase 1 (288 aa).

NAD(+)-binding positions include 26-28 (SGI), D47, 72-73 (DV), and 99-101 (NAG). S153 functions as the Proton donor in the catalytic mechanism. Residues S153 and Y166 each contribute to the substrate site. The NAD(+) site is built by Y166, K170, and T201. Y166 serves as the catalytic Proton acceptor. The active-site Proton donor/acceptor is the K170.

The protein belongs to the short-chain dehydrogenases/reductases (SDR) family. As to quaternary structure, homodimer. In terms of tissue distribution, expressed in mature seeds.

The enzyme catalyses 4,5,8-trihydroxycasbene + 2 NAD(+) = jolkinol C + 2 NADH + 2 H(+). It carries out the reaction a secondary alcohol + NAD(+) = a ketone + NADH + H(+). The catalysed reaction is a primary alcohol + NAD(+) = an aldehyde + NADH + H(+). It functions in the pathway secondary metabolite biosynthesis; terpenoid biosynthesis. In terms of biological role, involved in the biosynthesis of macrocyclic lathyrane type diterpenoids (also called Euphorbia factors) natural products, including the cyclization route from casbene to jolkinol C, a precursor for ingenol mebutate that is used to treat actinic keratosis, a precancerous skin condition. Catalyzes the conversion of 4,5,8-trihydroxycasbene into jolkinol C in presence of NAD. Also mediates the formation of casbene dione derivative and 4-ketocasbene from 4-hydroxy-8-ketocasbene and 4-hydroxycasbene, respectively. Together with CYP71D445, triggers the biosynthesis of 8-ketocasbene from 8-hydroxycasbene. The sequence is that of Short chain aldehyde dehydrogenase 1 from Euphorbia lathyris (Caper spurge).